The chain runs to 70 residues: AEIKVRDGYIVYPNNCVYHCGLNPYCNDLCTKNGAKSGYCQWLTKWGNACYCYALPEKVPIKDPSYKCYS.

The LCN-type CS-alpha/beta domain maps to 6–69 (RDGYIVYPNN…PIKDPSYKCY (64 aa)). 4 cysteine pairs are disulfide-bonded: C16–C68, C20–C40, C26–C50, and C30–C52.

Belongs to the long (4 C-C) scorpion toxin superfamily. Sodium channel inhibitor family. Alpha subfamily. As to expression, expressed by the venom gland.

It localises to the secreted. Alpha toxins bind voltage-independently at site-3 of sodium channels (Nav) and inhibit the inactivation of the activated channels, thereby blocking neuronal transmission. This toxin is active against rat Nav1.2/SCN2A and B.germanica Nav1. This chain is Alpha-toxin Bot9, found in Buthus occitanus tunetanus (Common European scorpion).